The primary structure comprises 387 residues: Large ribosomal subunit protein uL3 (387 aa).

The protein belongs to the universal ribosomal protein uL3 family.

It is found in the cytoplasm. This is Large ribosomal subunit protein uL3 (RPL3) from Kluyveromyces lactis (strain ATCC 8585 / CBS 2359 / DSM 70799 / NBRC 1267 / NRRL Y-1140 / WM37) (Yeast).